The chain runs to 249 residues: Triosephosphate isomerase (249 aa).

8-10 (NWK) provides a ligand contact to substrate. Catalysis depends on histidine 95, which acts as the Electrophile. Glutamate 163 functions as the Proton acceptor in the catalytic mechanism. Glycine 169 and serine 209 together coordinate substrate.

This sequence belongs to the triosephosphate isomerase family. In terms of assembly, homodimer.

It localises to the cytoplasm. It catalyses the reaction D-glyceraldehyde 3-phosphate = dihydroxyacetone phosphate. It functions in the pathway carbohydrate biosynthesis; gluconeogenesis. It participates in carbohydrate degradation; glycolysis; D-glyceraldehyde 3-phosphate from glycerone phosphate: step 1/1. In terms of biological role, involved in the gluconeogenesis. Catalyzes stereospecifically the conversion of dihydroxyacetone phosphate (DHAP) to D-glyceraldehyde-3-phosphate (G3P). The chain is Triosephosphate isomerase from Orientia tsutsugamushi (strain Boryong) (Rickettsia tsutsugamushi).